Consider the following 92-residue polypeptide: MESNFIDWHPADIIAGLRKKGTSMAAESRRNGLSSSTLANALSRPWPKGEMIIAKALGTDPWVIWPSRYHDPQTHEFIDRTQLMRSYTKPKK.

A DNA-binding region (H-T-H motif) is located at residues 50–69 (EMIIAKALGTDPWVIWPSRY).

This sequence belongs to the ner transcriptional regulatory family.

This protein is involved in positive regulation of the metabolism of sugars. The protein is Sugar fermentation stimulation protein B (sfsB) of Escherichia coli O157:H7.